The chain runs to 341 residues: NADH-quinone oxidoreductase subunit H 2 (341 aa).

8 helical membrane passes run 13–33 (IVVIGQSVLLIVVLLISIAYI), 82–102 (GVFLLAPLVTCVLALSAWAVI), 115–135 (VGVLYILAVSSLSVYGIIMAG), 161–181 (IGFVIICVLLCVGSLNLTAIV), 190–210 (VLGWYWLPLFPMFVVFYVSAL), 242–262 (LFVLGEYVAIVTMCAMGTILF), 277–297 (WVPGIVWFALKVLFMFFMFAM), and 317–337 (VFLPLSLAMVVIVAAVLQFAG).

The protein belongs to the complex I subunit 1 family. As to quaternary structure, NDH-1 is composed of 14 different subunits. Subunits NuoA, H, J, K, L, M, N constitute the membrane sector of the complex.

The protein resides in the cell inner membrane. It carries out the reaction a quinone + NADH + 5 H(+)(in) = a quinol + NAD(+) + 4 H(+)(out). Functionally, NDH-1 shuttles electrons from NADH, via FMN and iron-sulfur (Fe-S) centers, to quinones in the respiratory chain. The immediate electron acceptor for the enzyme in this species is believed to be ubiquinone. Couples the redox reaction to proton translocation (for every two electrons transferred, four hydrogen ions are translocated across the cytoplasmic membrane), and thus conserves the redox energy in a proton gradient. This subunit may bind ubiquinone. This Rhodopseudomonas palustris (strain HaA2) protein is NADH-quinone oxidoreductase subunit H 2.